Reading from the N-terminus, the 301-residue chain is Recombination-associated protein RdgC (301 aa).

The protein belongs to the RdgC family.

The protein localises to the cytoplasm. It is found in the nucleoid. May be involved in recombination. In Pseudoalteromonas atlantica (strain T6c / ATCC BAA-1087), this protein is Recombination-associated protein RdgC.